The following is a 592-amino-acid chain: UvrABC system protein C (592 aa).

Residues 15–92 form the GIY-YIG domain; that stretch reads ALPGCYLMKD…IQKHQPYFNI (78 aa). Positions 197–232 constitute a UVR domain; the sequence is DNVKKDLTEKMATAAQEMQFERAAELRDQLRYIEAT.

It belongs to the UvrC family. As to quaternary structure, interacts with UvrB in an incision complex.

The protein localises to the cytoplasm. In terms of biological role, the UvrABC repair system catalyzes the recognition and processing of DNA lesions. UvrC both incises the 5' and 3' sides of the lesion. The N-terminal half is responsible for the 3' incision and the C-terminal half is responsible for the 5' incision. This Latilactobacillus sakei subsp. sakei (strain 23K) (Lactobacillus sakei subsp. sakei) protein is UvrABC system protein C.